Reading from the N-terminus, the 219-residue chain is Hemolysin-3 (219 aa).

The next 7 membrane-spanning stretches (helical) occupy residues 19 to 39 (AITH…LIIH), 49 to 69 (VVAF…STLL), 83 to 103 (ILDH…FLLI), 112 to 132 (TLLA…IFFV), 138 to 158 (ASTL…KPLY), 165 to 185 (GFSL…FFLW), and 194 to 214 (IWHL…LFYV).

Belongs to the UPF0073 (Hly-III) family.

It is found in the cell membrane. Its function is as follows. Might be virulent against a mammalian host; when expressed in E.coli, the soluble extract has hemolytic activity on human erythrocytes. The activity is not inhibited by cholesterol or activated by 2-mercaptoethanol. Might be pore-forming protein. Its in vivo role in virulence is untested, nor has it been shown to be secreted by B.cereus. This is Hemolysin-3 from Bacillus cereus.